The sequence spans 37 residues: Alpha-conotoxin LvIA (37 aa).

Residues 1 to 20 (FRGRDAAAKASGLVGLTDRR) constitute a propeptide that is removed on maturation. 2 disulfide bridges follow: C22–C28 and C23–C36. Residues 24–26 (SHP) form a ser-Xaa-Pro motif, crucial for potent interaction with nAChR region. C36 carries the post-translational modification Cysteine amide.

It belongs to the conotoxin A superfamily. In terms of tissue distribution, expressed by the venom duct.

The protein resides in the secreted. Functionally, alpha-conotoxins act on postsynaptic membranes, they bind to the nicotinic acetylcholine receptors (nAChR) and thus inhibit them. This toxin blocks alpha-3-beta-2/CHRNA3-CHRNB2 nAChR with high selectivity (IC(50)=8.67 nM (on rat) and 17.5 (on human)). Also has weaker activity on alpha-6/alpha-3-beta-2-beta-3 (CHRNA6/CHRNA3-CHRNB2-CHRNB3) (IC(50)=108 nM (on rat)), alpha-6/alpha-3-beta-4 (CHRNA6/CHRNA3-CHRNB4) (IC(50)=121 nM (on rat)), alpha-3-beta-4 (CHRNA3-CHRNB4) (IC(50)=148 nM (on rat)), and alpha-7/CHRNA7 nAChRs (IC(50)=3000 nM (on rat)). When tested on mouse with hot-plate tests, this toxin significantly increases the base pain threshold and shows analgesic effects. The sequence is that of Alpha-conotoxin LvIA from Conus lividus (Livid cone).